A 319-amino-acid chain; its full sequence is Lambda-crystallin homolog (319 aa).

A2 is subject to N-acetylalanine. A Phosphoserine modification is found at S3. Residues 16 to 17, D36, E97, and K102 contribute to the NAD(+) site; that span reads VI. S111 carries the phosphoserine modification.

This sequence belongs to the 3-hydroxyacyl-CoA dehydrogenase family. Homodimer. Widely expressed, with highest levels in liver and kidney.

The protein resides in the cytoplasm. The catalysed reaction is L-gulonate + NAD(+) = 3-dehydro-L-gulonate + NADH + H(+). With respect to regulation, inhibited by malonate. Has high L-gulonate 3-dehydrogenase activity. It also exhibits low dehydrogenase activity toward L-3-hydroxybutyrate (HBA) and L-threonate. This Homo sapiens (Human) protein is Lambda-crystallin homolog (CRYL1).